We begin with the raw amino-acid sequence, 236 residues long: Small ribosomal subunit protein uS2c (236 aa).

The protein belongs to the universal ribosomal protein uS2 family.

It is found in the plastid. Its subcellular location is the chloroplast. This chain is Small ribosomal subunit protein uS2c (rps2), found in Calycanthus floridus var. glaucus (Eastern sweetshrub).